Reading from the N-terminus, the 442-residue chain is MKLQYLVALLSVQAVPPVTAGYIHQYALVGSVIRQPIDQKTQRENLNKLVSDSPLLSLHRTICEIESVSNREGAVGEVLLKYLRDRGFTVEKQIVPADRGTNSTAERFNIWAYPKGCPRPKIILTSHIDTVPPHIKYSLHAPDGDFDRAKVRIMGRGTVDAKASVAAQIIAALKHLKSNKDIPLGLLFVVSEEVGGSGMVHFSNSELNTNPPFFHTLIFGEPTDLTLVDGHKGNLRVTIEAKGVAAHSGYPWLGRSAISEILPILARMDELGDIPVETGGLPSSEKYGRTTVNIGTIKGGAADNVVPETASASIAVRLAAGTPEEAEEIIRRAVHDVSGGSTNITVNFPDSMPYPPIDLDVDVEGFDISTVNYGTDIPKLEIHDEELEVKVKRYLYGPGTIFVAHGAEEGITVGDLEKAVEGYSKLIDAAVKRGWPREVVVN.

An N-terminal signal peptide occupies residues 1–20 (MKLQYLVALLSVQAVPPVTA). Asn102 carries N-linked (GlcNAc...) asparagine glycosylation. Zn(2+) is bound at residue Asp160. Catalysis depends on Glu192, which acts as the Proton acceptor. Glu193 is a binding site for Zn(2+). Asn343 carries an N-linked (GlcNAc...) asparagine glycan.

It belongs to the peptidase M20A family. Zn(2+) is required as a cofactor.

The protein localises to the secreted. The protein is Probable carboxypeptidase PADG_04062 of Paracoccidioides brasiliensis (strain Pb18).